Consider the following 386-residue polypeptide: Ribonucleoside-diphosphate reductase subunit M2 (386 aa).

Ser20 carries the post-translational modification Phosphoserine. Thr33 is modified (phosphothreonine). The Cy motif lies at 49–51 (RRI). Residues Asp139, Glu170, and His173 each contribute to the Fe cation site. Tyr177 is a catalytic residue. Fe cation-binding residues include Glu233, Glu267, and His270.

Belongs to the ribonucleoside diphosphate reductase small chain family. As to quaternary structure, heterodimer of a large and a small subunit. Interacts (via Cy motif and when phosphorylated at Thr-33) with CCNF; the interaction occurs exclusively in G2 and early M. Fe cation is required as a cofactor. In terms of processing, phosphorylation on Ser-20 relieves the inhibitory effect on Wnt signaling. Phosphorylated on Thr-33 by CDK1 and CDK2; predominantly in G2 and M phase. Post-translationally, ubiquitinated by the SCF(CCNF) E3 ubiquitin-protein ligase complex; leading to its degradation by the proteasome.

It is found in the cytoplasm. Its subcellular location is the nucleus. The catalysed reaction is a 2'-deoxyribonucleoside 5'-diphosphate + [thioredoxin]-disulfide + H2O = a ribonucleoside 5'-diphosphate + [thioredoxin]-dithiol. Its function is as follows. Provides the precursors necessary for DNA synthesis. Catalyzes the biosynthesis of deoxyribonucleotides from the corresponding ribonucleotides. Inhibits Wnt signaling. This chain is Ribonucleoside-diphosphate reductase subunit M2 (RRM2), found in Mesocricetus auratus (Golden hamster).